Consider the following 697-residue polypeptide: MPDLLIELFSEEIPARMQARAREDLKKLVTDGLVEAGLTYASAGAFSTPRRLVLSVEGLSAESPTLREERKGPKADAPAAAIEGFLRSTGLTRDQLETREDKKGAVLFAVVEKPGRPAPEIVAEVLERTIRTFPWPKSMRWGTGSLRWVRPLQSILCLLSDEAGAEVVPMTLDGLTAGNSTEGHRFMAPARFAVSGFEDYRAKLARAFVMLDASEREQAIWHEATTQAFAQGLEVVPDAALLSEVAGLVEWPVVLMGAIGEDFLGLPPEVLQTSMREHQKFFSVTNPATGRIEKFVTVANRETADHGETILKGNGKVLSARLSDARFFWENDLRTVKTAGLEGMAEGLKQVTFHNRLGSQAARIARIEALAREIAPLVGASPDLAAEAARVAKADLQSAMVGEFPELQGTMGSYYARAAGLPEAVAQACKAHYQPLGPSDAVPTDPVSVAVALADKIDTLAGFWRIGEKPTGSKDPFALRRAALGVIRLLLTNNSRAGLMGIMLPAMNRHLEPFDTSDFTPYERDLLAFFHDRLKVHLREQGIRHDVIDACLAMPGNDDLTLLVKRAEALSAFLKTDDGTNLLQGFKRANNILTQAEAKDGVEYSFGADPKFAETDAERALFAALETAEAAIGPALQAEDFAAAMSAMAALRAPIDAFFETVQVNADNAVLRRNRLNMLHSIRATCARVADLTRIEG.

The protein belongs to the class-II aminoacyl-tRNA synthetase family. In terms of assembly, tetramer of two alpha and two beta subunits.

The protein localises to the cytoplasm. The catalysed reaction is tRNA(Gly) + glycine + ATP = glycyl-tRNA(Gly) + AMP + diphosphate. The polypeptide is Glycine--tRNA ligase beta subunit (Cereibacter sphaeroides (strain ATCC 17023 / DSM 158 / JCM 6121 / CCUG 31486 / LMG 2827 / NBRC 12203 / NCIMB 8253 / ATH 2.4.1.) (Rhodobacter sphaeroides)).